We begin with the raw amino-acid sequence, 265 residues long: Vegetative storage protein 2 (265 aa).

The signal sequence occupies residues 1–18 (MKILSLSLLLLLAATVSA). 3 N-linked (GlcNAc...) asparagine glycosylation sites follow: Asn110, Asn188, and Asn210.

The protein belongs to the APS1/VSP family. In terms of tissue distribution, highly expressed in flowers, but also found in leaves, vegetative shoots, petioles, peduncles, and receptacles of floral organs.

In terms of biological role, may function as somatic storage protein during early seedling development. This Arabidopsis thaliana (Mouse-ear cress) protein is Vegetative storage protein 2 (VSP2).